A 210-amino-acid chain; its full sequence is Probable GTP-binding protein EngB (210 aa).

The region spanning 25–199 is the EngB-type G domain; sequence TGIEVAFAGR…RQKLDTWFSE (175 aa). GTP-binding positions include 33-40, 60-64, 78-81, 145-148, and 178-180; these read GRSNAGKS, GRTQL, DLPG, TKAD, and FSS. Residues Ser-40 and Thr-62 each contribute to the Mg(2+) site.

It belongs to the TRAFAC class TrmE-Era-EngA-EngB-Septin-like GTPase superfamily. EngB GTPase family. Mg(2+) serves as cofactor.

Its function is as follows. Necessary for normal cell division and for the maintenance of normal septation. In Shigella boydii serotype 4 (strain Sb227), this protein is Probable GTP-binding protein EngB.